The following is a 476-amino-acid chain: Proton-coupled amino acid transporter 1 (476 aa).

Basic and acidic residues predominate over residues 1–15 (MSTQRLRNEDYHDYS). A disordered region spans residues 1–32 (MSTQRLRNEDYHDYSSTDVSPEESPSEGLNNL). Over 1-51 (MSTQRLRNEDYHDYSSTDVSPEESPSEGLNNLSSPGSYQRFGQSNSTTWFQ) the chain is Cytoplasmic. Residues 52-72 (TLIHLLKGNIGTGLLGLPLAV) form a helical membrane-spanning segment. At 73–78 (KNAGIV) the chain is on the extracellular side. Residues 79-99 (MGPISLLIIGIVAVHCMGILV) traverse the membrane as a helical segment. The Cytoplasmic portion of the chain corresponds to 100–141 (KCAHHFCRRLNKSFVDYGDTVMYGLESSPCSWLRNHAHWGRR). The helical transmembrane segment at 142 to 162 (VVDFFLIVTQLGFCCVYFVFL) threads the bilayer. The Extracellular segment spans residues 163–190 (ADNFKQVIEAANGTTNNCHNNETVILTP). N-linked (GlcNAc...) asparagine glycans are attached at residues asparagine 174 and asparagine 183. The cysteines at positions 180 and 329 are disulfide-linked. A helical transmembrane segment spans residues 191 to 211 (TMDSRLYMLSFLPFLVLLVFI). The Cytoplasmic segment spans residues 212–215 (RNLR). A helical membrane pass occupies residues 216–236 (ALSIFSLLANITMLVSLVMIY). Topologically, residues 237–257 (QFIVQRIPDPSHLPLVAPWKT) are extracellular. The helical transmembrane segment at 258 to 278 (YPLFFGTAIFSFEGIGMVLPL) threads the bilayer. The Cytoplasmic portion of the chain corresponds to 279–289 (ENKMKDPRKFP). Residues 290 to 310 (LILYLGMVIVTILYISLGCLG) traverse the membrane as a helical segment. Over 311 to 342 (YLQFGANIQGSITLNLPNCWLYQSVKLLYSIG) the chain is Extracellular. Residues 343–363 (IFFTYALQFYVPAEIIIPFFV) traverse the membrane as a helical segment. The Cytoplasmic portion of the chain corresponds to 364 to 372 (SRAPEHCEL). The chain crosses the membrane as a helical span at residues 373–393 (VVDLFVRTVLVCLTCILAILI). The Extracellular portion of the chain corresponds to 394–397 (PRLD). Residues 398-418 (LVISLVGSVSSSALALIIPPL) form a helical membrane-spanning segment. The Cytoplasmic portion of the chain corresponds to 419–439 (LEVTTFYSEGMSPLTIFKDAL). Residues 440–460 (ISILGFVGFVVGTYEALYELI) form a helical membrane-spanning segment. Residues 461–476 (QPSNAPIFINSTCAFI) are Extracellular-facing. Asparagine 470 is a glycosylation site (N-linked (GlcNAc...) asparagine).

Belongs to the amino acid/polyamine transporter 2 family.

It localises to the cell membrane. The protein resides in the apical cell membrane. The protein localises to the lysosome membrane. It catalyses the reaction glycine(in) + H(+)(in) = glycine(out) + H(+)(out). The enzyme catalyses L-alanine(in) + H(+)(in) = L-alanine(out) + H(+)(out). It carries out the reaction D-alanine(in) + H(+)(in) = D-alanine(out) + H(+)(out). The catalysed reaction is L-proline(out) + H(+)(out) = L-proline(in) + H(+)(in). It catalyses the reaction D-proline(out) + H(+)(out) = D-proline(in) + H(+)(in). The enzyme catalyses D-serine(out) + H(+)(out) = D-serine(in) + H(+)(in). It carries out the reaction L-serine(in) + H(+)(in) = L-serine(out) + H(+)(out). The catalysed reaction is 4-aminobutanoate(in) + H(+)(in) = 4-aminobutanoate(out) + H(+)(out). It catalyses the reaction beta-alanine(in) + H(+)(in) = beta-alanine(out) + H(+)(out). Electrogenic proton/amino acid symporter with selectivity for small apolar L-amino acids, their D-enantiomers and selected amino acid derivatives such as 4-aminobutanoate/GABA. May be involved in the efflux from the lysosomal compartment of neutral amino acids resulting from proteolysis. May play a role in specifying sites for exocytosis in neurons. The polypeptide is Proton-coupled amino acid transporter 1 (Homo sapiens (Human)).